The primary structure comprises 554 residues: Putative acyl-coenzyme A synthetase (554 aa).

An AMP-binding site is contributed by 195–206 (LLYSSGTTGPPK).

Belongs to the ATP-dependent AMP-binding enzyme family.

The sequence is that of Putative acyl-coenzyme A synthetase from Emericella nidulans (strain FGSC A4 / ATCC 38163 / CBS 112.46 / NRRL 194 / M139) (Aspergillus nidulans).